A 299-amino-acid chain; its full sequence is Oxygen-dependent coproporphyrinogen-III oxidase (299 aa).

A substrate-binding site is contributed by Ser-92. Residues His-96 and His-106 each contribute to the Mn(2+) site. His-106 serves as the catalytic Proton donor. 108–110 (NVR) is a binding site for substrate. Positions 145 and 175 each coordinate Mn(2+). Residues 240 to 275 (YVEFNLVWDRGTLFGLQTGGRTESILMSMPPLVRWE) form an important for dimerization region. 258-260 (GGR) lines the substrate pocket.

It belongs to the aerobic coproporphyrinogen-III oxidase family. Homodimer. Mn(2+) serves as cofactor.

The protein resides in the cytoplasm. The enzyme catalyses coproporphyrinogen III + O2 + 2 H(+) = protoporphyrinogen IX + 2 CO2 + 2 H2O. It participates in porphyrin-containing compound metabolism; protoporphyrin-IX biosynthesis; protoporphyrinogen-IX from coproporphyrinogen-III (O2 route): step 1/1. Involved in the heme biosynthesis. Catalyzes the aerobic oxidative decarboxylation of propionate groups of rings A and B of coproporphyrinogen-III to yield the vinyl groups in protoporphyrinogen-IX. The chain is Oxygen-dependent coproporphyrinogen-III oxidase from Escherichia coli (strain K12 / MC4100 / BW2952).